The chain runs to 292 residues: Expansin-B11 (292 aa).

Positions 1-27 (MAKSCTLVLLLVALVGLSLLVSPIACS) are cleaved as a signal peptide. The N-linked (GlcNAc...) asparagine glycan is linked to asparagine 51. The Expansin-like EG45 domain occupies 82-192 (GGACGYQTAV…RRVPCKYSGV (111 aa)). 3 disulfide bridges follow: cysteine 85/cysteine 114, cysteine 117/cysteine 187, and cysteine 122/cysteine 128. The Expansin-like CBD domain occupies 205–287 (FYFEVLIEFE…SWKPGVTYRS (83 aa)).

This sequence belongs to the expansin family. Expansin B subfamily. Expressed in internodes.

The protein localises to the secreted. The protein resides in the cell wall. Its subcellular location is the membrane. Its function is as follows. May cause loosening and extension of plant cell walls by disrupting non-covalent bonding between cellulose microfibrils and matrix glucans. No enzymatic activity has been found. May be required for rapid internodal elongation in deepwater rice during submergence. This is Expansin-B11 (EXPB11) from Oryza sativa subsp. japonica (Rice).